A 204-amino-acid polypeptide reads, in one-letter code: Lysozyme g (204 aa).

An N-terminal signal peptide occupies residues 1–19 (MHLMLVLLGLAALLGTSQS). Cystine bridges form between cysteine 23/cysteine 79 and cysteine 37/cysteine 48. Active-site residues include glutamate 92 and aspartate 105.

This sequence belongs to the glycosyl hydrolase 23 family.

It is found in the secreted. The enzyme catalyses Hydrolysis of (1-&gt;4)-beta-linkages between N-acetylmuramic acid and N-acetyl-D-glucosamine residues in a peptidoglycan and between N-acetyl-D-glucosamine residues in chitodextrins.. Its function is as follows. Has bacteriolytic activity against M.luteus. The sequence is that of Lysozyme g from Struthio camelus (Common ostrich).